A 330-amino-acid chain; its full sequence is Probable cell division protein WhiA (330 aa).

Residues 275-308 (SLDELGRLSDPPLTKDAIAGRIRRLLAMADRRAE) constitute a DNA-binding region (H-T-H motif).

This sequence belongs to the WhiA family.

Its function is as follows. Involved in cell division and chromosome segregation. This is Probable cell division protein WhiA from Kocuria rhizophila (strain ATCC 9341 / DSM 348 / NBRC 103217 / DC2201).